A 367-amino-acid polypeptide reads, in one-letter code: Queuine tRNA-ribosyltransferase (367 aa).

The active-site Proton acceptor is aspartate 91. Residues 91 to 95 (DSGGF), aspartate 145, glutamine 188, and glycine 215 contribute to the substrate site. Catalysis depends on aspartate 265, which acts as the Nucleophile. The RNA binding; important for wobble base 34 recognition stretch occupies residues 270 to 274 (TRVAR). The Zn(2+) site is built by cysteine 303, cysteine 305, cysteine 308, and histidine 334.

The protein belongs to the queuine tRNA-ribosyltransferase family. Homodimer. Within each dimer, one monomer is responsible for RNA recognition and catalysis, while the other monomer binds to the replacement base PreQ1. The cofactor is Zn(2+).

The enzyme catalyses 7-aminomethyl-7-carbaguanine + guanosine(34) in tRNA = 7-aminomethyl-7-carbaguanosine(34) in tRNA + guanine. The protein operates within tRNA modification; tRNA-queuosine biosynthesis. Functionally, catalyzes the base-exchange of a guanine (G) residue with the queuine precursor 7-aminomethyl-7-deazaguanine (PreQ1) at position 34 (anticodon wobble position) in tRNAs with GU(N) anticodons (tRNA-Asp, -Asn, -His and -Tyr). Catalysis occurs through a double-displacement mechanism. The nucleophile active site attacks the C1' of nucleotide 34 to detach the guanine base from the RNA, forming a covalent enzyme-RNA intermediate. The proton acceptor active site deprotonates the incoming PreQ1, allowing a nucleophilic attack on the C1' of the ribose to form the product. After dissociation, two additional enzymatic reactions on the tRNA convert PreQ1 to queuine (Q), resulting in the hypermodified nucleoside queuosine (7-(((4,5-cis-dihydroxy-2-cyclopenten-1-yl)amino)methyl)-7-deazaguanosine). This chain is Queuine tRNA-ribosyltransferase, found in Thermosipho africanus (strain TCF52B).